Consider the following 564-residue polypeptide: Phenylalanine--tRNA ligase beta subunit (564 aa).

The B5 domain maps to 286–362 (YFQNMLEVNV…IGMGLDSFKP (77 aa)). Mg(2+) contacts are provided by Asp-340, Asp-346, Glu-349, and Glu-350.

Belongs to the phenylalanyl-tRNA synthetase beta subunit family. Type 2 subfamily. Tetramer of two alpha and two beta subunits. Mg(2+) is required as a cofactor.

The protein localises to the cytoplasm. The enzyme catalyses tRNA(Phe) + L-phenylalanine + ATP = L-phenylalanyl-tRNA(Phe) + AMP + diphosphate + H(+). The chain is Phenylalanine--tRNA ligase beta subunit from Borrelia turicatae (strain 91E135).